The primary structure comprises 57 residues: uncharacterized protein (57 aa).

An N-terminal signal peptide occupies residues 1–22 (MNEIIITIIVLILLLFITLSRN). Positions 26 to 57 (NNQSNNGKKEKLIKCKKEVQQLRQKLDQLTFQ) form a coiled coil.

This is an uncharacterized protein from Acheta domesticus (House cricket).